Here is a 170-residue protein sequence, read N- to C-terminus: dCTP pyrophosphatase 1 (170 aa).

The disordered stretch occupies residues 1–25 (MSQAGTGVCGNGGQEDSAAAGPFSF). Ser2 is modified (N-acetylserine). A Phosphoserine modification is found at Ser2. Substrate is bound by residues His38 and 47 to 51 (WEQFH). Glu63 and Glu66 together coordinate Mg(2+). Trp73 is a binding site for substrate. Mg(2+) is bound by residues Glu95 and Asp98. Tyr102 contacts substrate. Residues 149–170 (LSENEAVGSGDPASELGNQAST) form a disordered region.

As to quaternary structure, homotetramer. Mg(2+) is required as a cofactor.

It is found in the cytoplasm. It localises to the cytosol. The catalysed reaction is dCTP + H2O = dCMP + diphosphate + H(+). Its function is as follows. Hydrolyzes deoxynucleoside triphosphates (dNTPs) to the corresponding nucleoside monophosphates. Has a strong preference for dCTP and its analogs including 5-iodo-dCTP and 5-methyl-dCTP for which it may even have a higher efficiency. May protect DNA or RNA against the incorporation of these genotoxic nucleotide analogs through their catabolism. This Rattus norvegicus (Rat) protein is dCTP pyrophosphatase 1.